The sequence spans 383 residues: Succinyl-diaminopimelate desuccinylase (383 aa).

His-74 lines the Zn(2+) pocket. The active site involves Asp-76. Residue Asp-107 participates in Zn(2+) binding. Glu-141 acts as the Proton acceptor in catalysis. Zn(2+)-binding residues include Glu-142, Glu-170, and His-356.

The protein belongs to the peptidase M20A family. DapE subfamily. In terms of assembly, homodimer. Requires Zn(2+) as cofactor. Co(2+) serves as cofactor.

The catalysed reaction is N-succinyl-(2S,6S)-2,6-diaminopimelate + H2O = (2S,6S)-2,6-diaminopimelate + succinate. The protein operates within amino-acid biosynthesis; L-lysine biosynthesis via DAP pathway; LL-2,6-diaminopimelate from (S)-tetrahydrodipicolinate (succinylase route): step 3/3. Its function is as follows. Catalyzes the hydrolysis of N-succinyl-L,L-diaminopimelic acid (SDAP), forming succinate and LL-2,6-diaminopimelate (DAP), an intermediate involved in the bacterial biosynthesis of lysine and meso-diaminopimelic acid, an essential component of bacterial cell walls. The protein is Succinyl-diaminopimelate desuccinylase of Ralstonia nicotianae (strain ATCC BAA-1114 / GMI1000) (Ralstonia solanacearum).